The sequence spans 167 residues: Alanine- and arginine-rich domain-containing protein (167 aa).

The disordered stretch occupies residues 140–167 (LKKRQDQELASKPQSPQDKEMNSECGSA).

In terms of tissue distribution, preferentially expressed in testis both in embryo and adult. Expressed at much lower level in other tissues.

This is Alanine- and arginine-rich domain-containing protein (Aard) from Mus musculus (Mouse).